The following is a 140-amino-acid chain: ATP synthase epsilon chain (140 aa).

It belongs to the ATPase epsilon chain family. As to quaternary structure, F-type ATPases have 2 components, CF(1) - the catalytic core - and CF(0) - the membrane proton channel. CF(1) has five subunits: alpha(3), beta(3), gamma(1), delta(1), epsilon(1). CF(0) has three main subunits: a, b and c.

It is found in the cell inner membrane. In terms of biological role, produces ATP from ADP in the presence of a proton gradient across the membrane. This is ATP synthase epsilon chain from Vibrio parahaemolyticus serotype O3:K6 (strain RIMD 2210633).